A 182-amino-acid polypeptide reads, in one-letter code: Isopentenyl-diphosphate Delta-isomerase (182 aa).

Residues H25 and H32 each contribute to the Mn(2+) site. The Nudix hydrolase domain maps to L30–M164. C67 is a catalytic residue. H69 is a binding site for Mn(2+). E87 contributes to the Mg(2+) binding site. The Mn(2+) site is built by E114 and E116. The active site involves E116.

Belongs to the IPP isomerase type 1 family. As to quaternary structure, homodimer. Mg(2+) is required as a cofactor. Mn(2+) serves as cofactor.

It localises to the cytoplasm. It carries out the reaction isopentenyl diphosphate = dimethylallyl diphosphate. It participates in isoprenoid biosynthesis; dimethylallyl diphosphate biosynthesis; dimethylallyl diphosphate from isopentenyl diphosphate: step 1/1. In terms of biological role, catalyzes the 1,3-allylic rearrangement of the homoallylic substrate isopentenyl (IPP) to its highly electrophilic allylic isomer, dimethylallyl diphosphate (DMAPP). The sequence is that of Isopentenyl-diphosphate Delta-isomerase from Shigella flexneri serotype 5b (strain 8401).